Here is a 340-residue protein sequence, read N- to C-terminus: PRKC apoptosis WT1 regulator protein (340 aa).

The segment covering 1–18 (MATGGYRTSSGLGGSTTD) has biased composition (polar residues). Positions 1-253 (MATGGYRTSS…TDRSGFPRYN (253 aa)) are disordered. Positions 47–82 (SDAAGKPPAGALGTPAAAAANELNNNLPGGAPAAPA) are enriched in low complexity. The B30.2/SPRY domain-binding motif signature appears at 68–72 (ELNNN). The residue at position 108 (Ser108) is a Phosphoserine. The Nuclear localization signal signature appears at 145 to 161 (RKGKGQIEKRKLREKRR). Residues 145-203 (RKGKGQIEKRKLREKRRSTGVVNIPAAECLDEYEDDEAGQKERKREDAITQQNTIQNEA) are selective for apoptosis induction in cancer cells (SAC). Thr163 is modified (phosphothreonine; by PKA). Residues 182–192 (AGQKERKREDA) show a composition bias toward basic and acidic residues. A coiled-coil region spans residues 186–206 (ERKREDAITQQNTIQNEAVNL). The span at 193–203 (ITQQNTIQNEA) shows a compositional bias: polar residues. At Ser231 the chain carries Phosphoserine. Positions 242-253 (SRTDRSGFPRYN) are enriched in basic and acidic residues. The leucine-zipper stretch occupies residues 300–340 (IGKLKEEIDLLNRDLDDIEDENEQLKQENKTLLKVVGQLTR).

As to quaternary structure, homooligomer. Interacts (via the C-terminal region) with WT1. Interacts with THAP1. Interacts with AATF. Interacts with BACE1. Interacts with SPSB1 (via B30.2/SPRY domain); this interaction is direct and occurs in association with the Elongin BC complex. Interacts with SPSB2 (via B30.2/SPRY domain); this interaction occurs in association with the Elongin BC complex. Interacts with SPSB4 (via B30.2/SPRY domain); this interaction occurs in association with the Elongin BC complex. Component of a ternary complex composed of SQSTM1 and PRKCZ. Interacts with actin. Preferentially phosphorylated at the Thr-163 by PKC in cancer cells. Widely expressed. Expression is elevated in various neurodegenerative diseases such as amyotrophic lateral sclerosis, Alzheimer, Parkinson and Huntington diseases and stroke. Down-regulated in several cancers.

It localises to the cytoplasm. Its subcellular location is the nucleus. Pro-apoptotic protein capable of selectively inducing apoptosis in cancer cells, sensitizing the cells to diverse apoptotic stimuli and causing regression of tumors in animal models. Induces apoptosis in certain cancer cells by activation of the Fas prodeath pathway and coparallel inhibition of NF-kappa-B transcriptional activity. Inhibits the transcriptional activation and augments the transcriptional repression mediated by WT1. Down-regulates the anti-apoptotic protein BCL2 via its interaction with WT1. Also seems to be a transcriptional repressor by itself. May be directly involved in regulating the amyloid precursor protein (APP) cleavage activity of BACE1. In Homo sapiens (Human), this protein is PRKC apoptosis WT1 regulator protein (PAWR).